We begin with the raw amino-acid sequence, 71 residues long: MGIIDTFVITAVTVIIFCLLIYAAYKRYKCIPSPDDRDKVLKSTLNDDTLFNQTLTPDQVKALHRLVTSSI.

A helical transmembrane segment spans residues 1–21 (MGIIDTFVITAVTVIIFCLLI). At 22–70 (YAAYKRYKCIPSPDDRDKVLKSTLNDDTLFNQTLTPDQVKALHRLVTSS) the chain is on the virion surface side.

Belongs to the chordopoxvirinae A13 family.

It is found in the virion membrane. In terms of biological role, essential for the encapsidation of DNA into immature virions (IV) and the subsequent maturation of IV into mature virions (MV). The polypeptide is Virion membrane protein A13 homolog (Vertebrata (FPV)).